Reading from the N-terminus, the 262-residue chain is NAD-dependent glucose-6-phosphate dehydrogenase (262 aa).

4 residues coordinate NAD(+): N90, S115, Y152, and K156. The Proton acceptor role is filled by Y152.

Belongs to the NAD(P)-dependent epimerase/dehydratase family. In terms of assembly, homodimer.

The catalysed reaction is D-glucose 6-phosphate + NAD(+) = 6-phospho-D-glucono-1,5-lactone + NADH + H(+). Its pathway is carbohydrate degradation; pentose phosphate pathway. Functionally, catalyzes the NAD-dependent oxidation of glucose 6-phosphate to 6-phosphogluconolactone. This Haloferax volcanii (strain ATCC 29605 / DSM 3757 / JCM 8879 / NBRC 14742 / NCIMB 2012 / VKM B-1768 / DS2) (Halobacterium volcanii) protein is NAD-dependent glucose-6-phosphate dehydrogenase.